A 203-amino-acid polypeptide reads, in one-letter code: Pyridoxal 5'-phosphate synthase subunit PdxT (203 aa).

49 to 51 lines the L-glutamine pocket; sequence GES. Cys-81 functions as the Nucleophile in the catalytic mechanism. L-glutamine is bound by residues Arg-110 and 139–140; that span reads IR. Residues His-175 and Glu-177 each act as charge relay system in the active site.

This sequence belongs to the glutaminase PdxT/SNO family. As to quaternary structure, in the presence of PdxS, forms a dodecamer of heterodimers. Only shows activity in the heterodimer.

It carries out the reaction aldehydo-D-ribose 5-phosphate + D-glyceraldehyde 3-phosphate + L-glutamine = pyridoxal 5'-phosphate + L-glutamate + phosphate + 3 H2O + H(+). The catalysed reaction is L-glutamine + H2O = L-glutamate + NH4(+). The protein operates within cofactor biosynthesis; pyridoxal 5'-phosphate biosynthesis. In terms of biological role, catalyzes the hydrolysis of glutamine to glutamate and ammonia as part of the biosynthesis of pyridoxal 5'-phosphate. The resulting ammonia molecule is channeled to the active site of PdxS. This chain is Pyridoxal 5'-phosphate synthase subunit PdxT, found in Parafrankia sp. (strain EAN1pec).